The sequence spans 345 residues: 3-isopropylmalate dehydrogenase (345 aa).

NAD(+) is bound at residue 76–87; that stretch reads GPKYDNAPVRPE. Residues arginine 94, arginine 104, arginine 132, and aspartate 216 each contribute to the substrate site. Mg(2+)-binding residues include aspartate 216, aspartate 240, and aspartate 244. 274–286 contacts NAD(+); it reads GSAPDIAGQGIAN.

Belongs to the isocitrate and isopropylmalate dehydrogenases family. LeuB type 1 subfamily. As to quaternary structure, homodimer. The cofactor is Mg(2+). It depends on Mn(2+) as a cofactor.

The protein resides in the cytoplasm. The enzyme catalyses (2R,3S)-3-isopropylmalate + NAD(+) = 4-methyl-2-oxopentanoate + CO2 + NADH. It functions in the pathway amino-acid biosynthesis; L-leucine biosynthesis; L-leucine from 3-methyl-2-oxobutanoate: step 3/4. Functionally, catalyzes the oxidation of 3-carboxy-2-hydroxy-4-methylpentanoate (3-isopropylmalate) to 3-carboxy-4-methyl-2-oxopentanoate. The product decarboxylates to 4-methyl-2 oxopentanoate. This chain is 3-isopropylmalate dehydrogenase, found in Streptococcus thermophilus (strain CNRZ 1066).